We begin with the raw amino-acid sequence, 128 residues long: uncharacterized protein (128 aa).

Transmembrane regions (helical) follow at residues 13–35, 42–64, and 90–112; these read FQMASFITSGLLVIIGLYGVFFV, IIALEILGSGVNLALIAIGYNGG, and LVLTNIVIEASMLAVMLGVSIIL.

It is found in the cell membrane. This is an uncharacterized protein from Methanocaldococcus jannaschii (strain ATCC 43067 / DSM 2661 / JAL-1 / JCM 10045 / NBRC 100440) (Methanococcus jannaschii).